The sequence spans 156 residues: Small ribosomal subunit protein uS7 (156 aa).

The protein belongs to the universal ribosomal protein uS7 family. Part of the 30S ribosomal subunit. Contacts proteins S9 and S11.

In terms of biological role, one of the primary rRNA binding proteins, it binds directly to 16S rRNA where it nucleates assembly of the head domain of the 30S subunit. Is located at the subunit interface close to the decoding center, probably blocks exit of the E-site tRNA. The polypeptide is Small ribosomal subunit protein uS7 (Buchnera aphidicola subsp. Cinara cedri (strain Cc)).